We begin with the raw amino-acid sequence, 405 residues long: Potassium channel subfamily K member 13 (405 aa).

At 1-19 the chain is on the cytoplasmic side; the sequence is MAGRGCSCSPGHLNEDNAR. Residues 20 to 40 traverse the membrane as a helical segment; the sequence is FLLLAGLILLYLLGGAAVFSA. N-linked (GlcNAc...) asparagine glycosylation is found at Asn-59 and Asn-65. The segment at residues 95 to 115 is an intramembrane region (pore-forming); sequence WDFTGAFYFVGTVVTTIGFGM. K(+) is bound by residues Thr-110, Ile-111, and Gly-112. The interval 110-115 is selectivity filter 1; the sequence is TIGFGM. A helical transmembrane segment spans residues 125–145; the sequence is VFLIFYGLIGCASTILFFNLF. At 146–193 the chain is on the cytoplasmic side; sequence LERLITVIAYVMRTCHHQQLRRRGTVARDNRKAPRKGEADSLAGWKPS. Residues 194–214 traverse the membrane as a helical segment; that stretch reads VYYVMLILCLASVAISCGASA. Positions 224 to 244 form an intramembrane region, pore-forming; it reads YFDSVYFCFVASSTIGFGDLV. Residues Thr-237, Ile-238, Gly-239, and Phe-240 each coordinate K(+). The selectivity filter 2 stretch occupies residues 237-242; the sequence is TIGFGD. The helical transmembrane segment at 263 to 283 threads the bilayer; that stretch reads FFILMGVCCIYSMFNVISILI. At 284 to 405 the chain is on the cytoplasmic side; it reads KQTVNWILRK…NRLAETSGDR (122 aa).

Belongs to the two pore domain potassium channel (TC 1.A.1.8) family. Homodimer. Heterodimer with KCNK12. Ubiquitous. In brain expression is rather low and restricted to the olfactory bulb and tubercle, to the ventromedial hypothalamic nucleus, lateral septal nucleus dorsal, lateral mammillary nucleus, lateral parabrachial nuclei, reticular nucleus and reunions nuclei.

It is found in the cell membrane. It carries out the reaction K(+)(in) = K(+)(out). With respect to regulation, the channel currents are activated by arachidonic acid, inhibited by volatile anesthetic halothane, partially inhibited by Ba(2+) ions and only weakly inhibited by extracellular acidification to pH 6. In terms of biological role, k(+) channel that conducts outward rectifying tonic currents potentiated by purinergic signals. Homo- and heterodimerizes to form functional channels with distinct regulatory and gating properties. Contributes most of K(+) currents at the plasma membrane of resting microglia. Maintains a depolarized membrane potential required for proper ramified microglia morphology and phagocytosis, selectively mediating microglial pruning of presynaptic compartments at hippocampal excitatory synapses. Upon local release of ATP caused by neuronal injury or infection, it is potentiated by P2RY12 and P2RX7 receptor signaling and contributes to ATP-triggered K(+) efflux underlying microglial NLRP3 inflammasome assembly and IL1B release. This chain is Potassium channel subfamily K member 13, found in Rattus norvegicus (Rat).